The following is a 426-amino-acid chain: DNA polymerase processivity factor component A20 (426 aa).

Belongs to the poxviruses A20 family. In terms of assembly, interacts with the DNA polymerase catalytic subunit E9. Interacts with UDG. Component of the Uracil-DNA glycosylase(UDG)-A20-polymerase complex; A20 and UDG form a heterodimeric processivity factor that associates with E9 to form the processive polymerase holoenzyme. Interacts with D5.

In terms of biological role, plays an essential role in viral DNA replication by acting as the polymerase processivity factor together with protein D4. May serve as a bridge which links the DNA polymerase E9 and the uracil DNA glycosylase. In Vaccinia virus (strain Ankara) (VACV), this protein is DNA polymerase processivity factor component A20.